A 190-amino-acid chain; its full sequence is Jupiter microtubule associated homolog 2 (190 aa).

The residue at position 1 (methionine 1) is an N-acetylmethionine. A disordered region spans residues 1-190 (MFQVPDSEGG…PGGKSSISFY (190 aa)). Residue serine 30 is modified to Phosphoserine. The residue at position 35 (threonine 35) is a Phosphothreonine. Residues 35–44 (TPSSRPNRMA) are compositionally biased toward polar residues. A phosphoserine mark is found at serine 45, serine 69, and serine 97. Positions 110 to 129 (KPKDHVFLCEGEEPKSDLKA) are enriched in basic and acidic residues. Phosphoserine is present on residues serine 132 and serine 144. A compositionally biased stretch (basic and acidic residues) spans 139–167 (PGEKGSARKAGPAKEQEPMPTVDSHEPRL).

It belongs to the JUPITER family. Monomer. Dimer. Interacts with TPCN1. As to expression, expressed in liver, kidney, prostate, testis and uterus.

It localises to the cytoplasm. It is found in the nucleus. In terms of biological role, nicotinic acid adenine dinucleotide phosphate (NAADP) binding protein required for NAADP-evoked intracellular calcium release. Confers NAADP-sensitivity to the two pore channels (TPCs) complex. Enables NAADP to activate Ca(2+) release from the endoplasmic reticulum through ryanodine receptors. Its function is as follows. (Microbial infection) Involved in the endolysosomal trafficking of human coronavirus SARS-CoV-2. In Homo sapiens (Human), this protein is Jupiter microtubule associated homolog 2.